Consider the following 1167-residue polypeptide: DNA-directed RNA polymerase subunit beta (1167 aa).

The protein belongs to the RNA polymerase beta chain family. As to quaternary structure, the RNAP catalytic core consists of 2 alpha, 1 beta, 1 beta' and 1 omega subunit. When a sigma factor is associated with the core the holoenzyme is formed, which can initiate transcription.

The catalysed reaction is RNA(n) + a ribonucleoside 5'-triphosphate = RNA(n+1) + diphosphate. In terms of biological role, DNA-dependent RNA polymerase catalyzes the transcription of DNA into RNA using the four ribonucleoside triphosphates as substrates. This Mycolicibacterium vanbaalenii (strain DSM 7251 / JCM 13017 / BCRC 16820 / KCTC 9966 / NRRL B-24157 / PYR-1) (Mycobacterium vanbaalenii) protein is DNA-directed RNA polymerase subunit beta.